We begin with the raw amino-acid sequence, 190 residues long: Imidazoleglycerol-phosphate dehydratase (190 aa).

The protein belongs to the imidazoleglycerol-phosphate dehydratase family.

It localises to the cytoplasm. It carries out the reaction D-erythro-1-(imidazol-4-yl)glycerol 3-phosphate = 3-(imidazol-4-yl)-2-oxopropyl phosphate + H2O. The protein operates within amino-acid biosynthesis; L-histidine biosynthesis; L-histidine from 5-phospho-alpha-D-ribose 1-diphosphate: step 6/9. The sequence is that of Imidazoleglycerol-phosphate dehydratase from Campylobacter fetus subsp. fetus (strain 82-40).